We begin with the raw amino-acid sequence, 78 residues long: Cytochrome c oxidase subunit 8, mitochondrial (78 aa).

Residues 1–27 (MLCQQMIRTTAKRSSNIMTRPIIMKRS) constitute a mitochondrion transit peptide. At 28-51 (VHFKDGVYENIPFKVKGRKTPYAL) the chain is on the mitochondrial matrix side. Residues 52-73 (SHFGFFAIGFAVPFVACYVQLK) traverse the membrane as a helical segment. A topological domain (mitochondrial intermembrane) is located at residue Lys-74. The propeptide occupies 75-78 (SGAF).

It belongs to the cytochrome c oxidase VIIc family. As to quaternary structure, component of the cytochrome c oxidase (complex IV, CIV), a multisubunit enzyme composed of 12 subunits. The complex is composed of a catalytic core of 3 subunits COX1, COX2 and COX3, encoded in the mitochondrial DNA, and 9 supernumerary subunits COX4, COX5A (or COX5B), COX6, COX7, COX8, COX9, COX12, COX13 and COX26, which are encoded in the nuclear genome. The complex exists as a monomer or a dimer and forms supercomplexes (SCs) in the inner mitochondrial membrane with a dimer of ubiquinol-cytochrome c oxidoreductase (cytochrome b-c1 complex, complex III, CIII), resulting in 2 different assemblies (supercomplexes III(2)IV and III(2)IV(2)).

Its subcellular location is the mitochondrion inner membrane. It functions in the pathway energy metabolism; oxidative phosphorylation. Component of the cytochrome c oxidase, the last enzyme in the mitochondrial electron transport chain which drives oxidative phosphorylation. The respiratory chain contains 3 multisubunit complexes succinate dehydrogenase (complex II, CII), ubiquinol-cytochrome c oxidoreductase (cytochrome b-c1 complex, complex III, CIII) and cytochrome c oxidase (complex IV, CIV), that cooperate to transfer electrons derived from NADH and succinate to molecular oxygen, creating an electrochemical gradient over the inner membrane that drives transmembrane transport and the ATP synthase. Cytochrome c oxidase is the component of the respiratory chain that catalyzes the reduction of oxygen to water. Electrons originating from reduced cytochrome c in the intermembrane space (IMS) are transferred via the dinuclear copper A center (CU(A)) of COX2 and heme A of COX1 to the active site in COX1, a binuclear center (BNC) formed by heme A3 and copper B (CU(B)). The BNC reduces molecular oxygen to 2 water molecules using 4 electrons from cytochrome c in the IMS and 4 protons from the mitochondrial matrix. The sequence is that of Cytochrome c oxidase subunit 8, mitochondrial (COX8) from Saccharomyces cerevisiae (strain ATCC 204508 / S288c) (Baker's yeast).